The sequence spans 182 residues: Isopentenyl-diphosphate Delta-isomerase (182 aa).

Mn(2+) is bound by residues His25 and His32. Residue Cys67 is part of the active site. His69 serves as a coordination point for Mn(2+). A Mg(2+)-binding site is contributed by Glu87. The Mn(2+) site is built by Glu114 and Glu116. Residue Glu116 is part of the active site.

Belongs to the IPP isomerase type 1 family. In terms of assembly, homodimer. Mg(2+) is required as a cofactor. Mn(2+) serves as cofactor.

The protein resides in the cytoplasm. It catalyses the reaction isopentenyl diphosphate = dimethylallyl diphosphate. The protein operates within isoprenoid biosynthesis; dimethylallyl diphosphate biosynthesis; dimethylallyl diphosphate from isopentenyl diphosphate: step 1/1. In terms of biological role, catalyzes the 1,3-allylic rearrangement of the homoallylic substrate isopentenyl (IPP) to its highly electrophilic allylic isomer, dimethylallyl diphosphate (DMAPP). The chain is Isopentenyl-diphosphate Delta-isomerase from Escherichia coli (strain K12 / MC4100 / BW2952).